Reading from the N-terminus, the 960-residue chain is MLPRLFLTILPVCSPSISNKTSKKFRDAHANHVFLFEMDLNNTLSFFGKQLKLDTEEEISKVIDQIRKHLNLEVLDFRGNTLSVLAGKLIAESLKTRRELKECIWSDMFTGRLKDEIPLVLDALGEALTASGCRLTTLDLSDNAFGAGLSTSLYNFLQSPALYSLENLILNNNGLGLAGKTVGKALCSLIDASKKAGTPLKLKKFVCGRNRLEVESTIALSDAFIKLGTLEEIRLPQNGIRDDGIIALAEAFRMNKKLRIIDINDNFCCPEGAIQISEVLSDLQFIEVLDLGDCVCDDPGVLAIIAELDKINRDCLKKVVLSGNNITSDVIDEIGACFNSPKMCHVKVDISVNMFGKDFDSAKARHGKGNIDFGRRGDDELLSSDEEEEQGAEDASMEEDAFNTSRETVIDRSNLHEASADEMMNDLMNKGFGCMKIEDNQQNSNGNGMVSFLDKSLKLDTAESAEPVVKVIAAASSMKALELRGNTLGIAAGNVIAKALESHPELERCLWSDLFTGRLKNEIPPILEALGKAMMTAGCKIKELDLSDNAFGPIGADALKDLLESPSSFSLEVLKLNNNGLGIGGKQIAKSLTECLRKSIAVGGENRLRLKTFIAGRNRLENPGAHALAATFKALETVEWFDVRQNGIHEEGIRALVAALKHNRNLRYLWLEDNTVLPKGAKALAKTLESWPKLEVLNLSDCLIRDAGCNYIIDHLNPQHHRHLKNVYLCGNELTPPVAKLLIQKWSKFDGLTPKPVLHIHTNSFGDEFSDVAGMAPENVNVGDEDDDLGSLDGDQEEYNSKSSDSEDADLDDDDEDDDEEAEIQIIDNGESQLKLAMDRIDRLDIDFESRFQEDTARVILQLSAPLKSCKMSEPALQRAIEVAENIVRRVESVKRNPIPATTQLVNNIVAQCAGTGVKAETDWGYGADPQVISRLFSELVARGHFKLELALLQRFFPSQ.

5 LRR repeats span residues 69–92 (HLNL…LIAE), 132–156 (GCRL…LYNF), 162–185 (LYSL…VGKA), 227–254 (LGTL…AFRM), and 313–340 (RDCL…CFNS). Positions 370 to 408 (NIDFGRRGDDELLSSDEEEEQGAEDASMEEDAFNTSRET) are disordered. Residues 380 to 401 (ELLSSDEEEEQGAEDASMEEDA) are compositionally biased toward acidic residues. 4 LRR repeats span residues 475–498 (ASSM…VIAK), 538–561 (GCKI…ALKD), 568–595 (SFSL…LTEC), and 663–685 (NRNL…KALA). The interval 777–819 (PENVNVGDEDDDLGSLDGDQEEYNSKSSDSEDADLDDDDEDDD) is disordered. Acidic residues-rich tracts occupy residues 783–798 (GDED…DQEE) and 806–819 (SEDA…EDDD).

The protein localises to the nucleus. Functionally, GTPase system comprising ran-1, ran-2 and ran-3 is essential in nucleocytoplasmic trafficking. Ran-2 is a GTPase activator for the nuclear RAS-related regulatory protein Ran, converting it to the putatively inactive GDP-bound state. Required for correct chromosome alignment and segregation on the metaphase plate. The polypeptide is Ran GTPase-activating protein 2 (ran-2) (Caenorhabditis elegans).